The following is a 457-amino-acid chain: BAG family molecular chaperone regulator 4 (457 aa).

The disordered stretch occupies residues 1–101; sequence MSALRRSGYG…QPPYPSYNSN (101 aa). S7 carries the post-translational modification Phosphoserine. The segment covering 8-20 has biased composition (low complexity); the sequence is GYGPSDGPSYGRY. Positions 30–47 are enriched in pro residues; sequence VHPPPPLYPLRPEPPQPP. R40, R53, and R108 each carry omega-N-methylarginine. Disordered regions lie at residues 113–136, 166–333, and 347–377; these read YPSTYPVRPELQGQSLNSYTNGAY, STEV…DDSD, and LYGNATSDHPNNQDQSSSLPEECVPSDESTP. Over residues 166–182 the composition is skewed to polar residues; sequence STEVPSTYRSSGNSPTP. Position 185 is an omega-N-methylarginine (R185). Composition is skewed to low complexity over residues 274 to 284 and 294 to 308; these read STSPWPSSGSP and QPKDSSYPYSQSDQS. Polar residues-rich tracts occupy residues 320–333 and 347–365; these read QYESSGTVNNDDSD and LYGNATSDHPNNQDQSSSL. The BAG domain occupies 379-456; that stretch reads SIKKIIHVLE…AILEKLEKKG (78 aa).

As to quaternary structure, binds to the ATPase domain of HSP/HSC70 chaperones. Binds to the death domain of TNFRSF1A in the absence of TNF and thereby prevents binding of adapter molecules such as TRADD or TRAF2. Binds to the death domain of TNFRSF12. Interacts with PRKN. Ubiquitous.

Its subcellular location is the cytoplasm. In terms of biological role, inhibits the chaperone activity of HSP70/HSC70 by promoting substrate release. Prevents constitutive TNFRSF1A signaling. Negative regulator of PRKN translocation to damaged mitochondria. The sequence is that of BAG family molecular chaperone regulator 4 (BAG4) from Homo sapiens (Human).